The chain runs to 1307 residues: MSSLPGCMSLAAAPAAADSAEIAELQQAVVEELGISMEELRQYIDEELEKMDCIQQRKKQLAELETWVLQKESEVAYVDRLFDDASREVTNCESLVKDFYSKLGLQYHDSSSEDEASRPTEIIEIPDEDDDVLSIDSGDAGSRTPKDQKLREAMAALRKSAQDVQKFMDAVNKKSSSQDLHKGTLGQVSGELSKDGDLIVSMRILGKKRTKTWHKGTLIAIQTVGLGKKYKVKFDNKGKSLLSGNHIAYDYHPPADKLFVGSRVVAKYKDGNQVWLYAGIVAETPNVKNKLRFLIFFDDGYASYVTQSELYPICRPLKKTWEDIEDSSCRDFIEEYITAYPNRPMVLLKSGQLIKTEWEGTWWKSRVEEVDGSLVRILFLDDKRCEWIYRGSTRLEPMFSMKTSSASAMEKKQGGQLRTRPNMGAVRSKGPVVQYTQDLTGTGIQFKPMEPLQPIAPPAPLPIPPLSPQAADTDLESQLAQSRKQVAKKSTSFRPGSVGSGHSSPTSSTLSENVSAGKLGINQTYRSPLASVTSTPASAAPPVPPVPPGPPTPPGPPAPPGPLAPPAFHGMLERAPAEPSYRAPMEKLFYLPHVCSYTCLSRIRPMRNEQYRGKNPLLVPLLYDFRRMTARRRVNRKMGFHVIYKTPCGLCLRTMQEIERYLFETGCDFLFLEMFCLDPYVLVDRKFQPFKPFYYILDITYGKEDVPLSCVNEIDTTPPPQVAYSKERIPGKGVFINTGPEFLVGCDCKDGCRDKSKCACHQLTIQATACTPGGQVNPNSGYQYKRLEECLPTGVYECNKRCNCDPNMCTNRLVQHGLQVRLQLFKTQNKGWGIRCLDDIAKGSFVCIYAGKILTDDFADKEGLEMGDEYFANLDHIESVENFKEGYESDVPTSSDSSGVDMKDQEDGNSGSEDPEESNDDSSDDNFCKDEDFSTSSVWRSYATRRQTRGQKENELSEMTSKDSRPPDLGPPHVPIPSSVSVGGCNPPSSEETPKNKVASWLSCNSVSEGGFADSDSRSSFKTSEGGDGRAGGGRGEAERASTSGLSFKDEGDNKQPKKEDPENRNKMPVVTEGSQNHGHNPPMKSEGLRRPASKMSVLQSQRVVTSTQSNPDDILTLSSSTESEGESGTSRKPTAGHTSATAVDSDDIQTISSGSDGDDFEDKKNLSGPTKRQVAVKSTRGFALKSTHGIAIKSTNMASVDKGESAPVRKNTRQFYDGEESCYIIDAKLEGNLGRYLNHSCSPNLFVQNVFVDTHDLRFPWVAFFASKRIRAGTELTWDYNYEVGSVEGKELLCCCGAIECRGRLL.

Residues 30-65 (VEELGISMEELRQYIDEELEKMDCIQQRKKQLAELE) are a coiled coil. A phosphoserine mark is found at Ser112 and Ser117. Thr120 carries the phosphothreonine modification. The segment at 127 to 148 (DEDDDVLSIDSGDAGSRTPKDQ) is disordered. Residue Lys182 forms a Glycyl lysine isopeptide (Lys-Gly) (interchain with G-Cter in SUMO2); alternate linkage. Lys182 participates in a covalent cross-link: Glycyl lysine isopeptide (Lys-Gly) (interchain with G-Cter in ubiquitin); alternate. Tudor domains follow at residues 257–320 (KLFV…LKKT) and 347–403 (LLKS…SMKT). Disordered stretches follow at residues 404-424 (SSAS…PNMG), 444-512 (IQFK…TLSE), and 531-570 (SVTS…AFHG). Pro residues predominate over residues 454 to 467 (PIAPPAPLPIPPLS). The segment covering 476 to 494 (ESQLAQSRKQVAKKSTSFR) has biased composition (polar residues). Low complexity predominate over residues 495–512 (PGSVGSGHSSPTSSTLSE). Pro residues predominate over residues 539–565 (AAPPVPPVPPGPPTPPGPPAPPGPLAP). The region spanning 611–682 (YRGKNPLLVP…EMFCLDPYVL (72 aa)) is the MBD domain. Residues 744–817 (VGCDCKDGCR…MCTNRLVQHG (74 aa)) form the Pre-SET domain. Zn(2+) contacts are provided by Cys746, Cys748, Cys752, Cys758, Cys760, Cys798, Cys802, Cys804, and Cys809. The SET domain maps to 820 to 1282 (VRLQLFKTQN…AGTELTWDYN (463 aa)). S-adenosyl-L-methionine is bound by residues 830–832 (KGW), Asp868, and Tyr870. A Glycyl lysine isopeptide (Lys-Gly) (interchain with G-Cter in ubiquitin) cross-link involves residue Lys884. The segment at 885 to 1174 (EGYESDVPTS…KNLSGPTKRQ (290 aa)) is disordered. The span at 913–924 (EDPEESNDDSSD) shows a compositional bias: acidic residues. A compositionally biased stretch (basic and acidic residues) spans 950–966 (GQKENELSEMTSKDSRP). Ser1042 bears the Phosphoserine mark. Basic and acidic residues predominate over residues 1048 to 1066 (FKDEGDNKQPKKEDPENRN). Lys1049 is covalently cross-linked (Glycyl lysine isopeptide (Lys-Gly) (interchain with G-Cter in SUMO2); alternate). Residue Lys1049 forms a Glycyl lysine isopeptide (Lys-Gly) (interchain with G-Cter in SUMO1); alternate linkage. Residues Lys1055 and Lys1085 each participate in a glycyl lysine isopeptide (Lys-Gly) (interchain with G-Cter in SUMO2) cross-link. Polar residues predominate over residues 1097-1112 (SVLQSQRVVTSTQSNP). Low complexity predominate over residues 1116 to 1131 (LTLSSSTESEGESGTS). Polar residues predominate over residues 1137 to 1156 (GHTSATAVDSDDIQTISSGS). Lys1165 participates in a covalent cross-link: Glycyl lysine isopeptide (Lys-Gly) (interchain with G-Cter in SUMO2). N6,N6,N6-trimethyllysine; alternate is present on residues Lys1186 and Lys1194. 2 positions are modified to N6,N6-dimethyllysine; alternate: Lys1186 and Lys1194. S-adenosyl-L-methionine-binding positions include Arg1236 and 1239–1240 (NH). Positions 1242, 1295, 1297, and 1302 each coordinate Zn(2+). The Post-SET domain maps to 1291-1307 (KELLCCCGAIECRGRLL).

Belongs to the class V-like SAM-binding methyltransferase superfamily. Histone-lysine methyltransferase family. Suvar3-9 subfamily. Part of a complex containing at least CDYL, REST, WIZ, SETDB1, EHMT1 and EHMT2. Forms a complex with ATRX, TRIM28 and ZNF274. Probably part of a corepressor complex containing ZNF304, TRIM28, SETDB1 and DNMT1. Interacts with TRIM28/TIF1B. Interacts with ATF7IP and ATF7IP2; the interaction with ATF7IP is required to stimulate histone methyltransferase activity and facilitate the conversion of dimethylated to trimethylated H3 'Lys-9'. Interacts with MBD1; interaction is abolished when MBD1 is sumoylated. Interacts with CBX1 and CBX5. Interacts with DNMT3A and DNMT3B. Interacts with SUMO2. Interacts with MPHOSPH8. Interacts with ERG. Interacts with HDAC1, HDAC2, SIN3A, SIN3B. Interacts with ATRX. Interacts with RESF1. Interacts with ZNF638. Interacts with TASOR. Interacts with ZNF263; recruited to the SIX3 promoter along with other proteins involved in chromatin modification and transcriptional corepression where it contributes to transcriptional repression. Interacts with PHF13; the interaction probably enhances SETDB1 chromatin-associated levels and activity. Interacts with VRK1. In terms of processing, degraded by the proteasome, shielded by interaction with ATF7IP. Monoubiquitinated at Lys-884 by E2 enzymes UBE2E family. The conjugated-Ub is protected from deubiquitination through the SET domain. Monoubiquitination at Lys-884 is required for catalytic activity and H3K9 methylation and endogenous retrovirus silencing. In terms of tissue distribution, ubiquitously expressed. Strong expression in liver and testis. Expressed in the brain, lungs, kidneys, uterus and seminal vesicles.

Its subcellular location is the nucleus. It is found in the chromosome. It carries out the reaction N(6),N(6)-dimethyl-L-lysyl(9)-[histone H3] + S-adenosyl-L-methionine = N(6),N(6),N(6)-trimethyl-L-lysyl(9)-[histone H3] + S-adenosyl-L-homocysteine + H(+). In terms of biological role, histone methyltransferase that specifically trimethylates 'Lys-9' of histone H3. H3 'Lys-9' trimethylation represents a specific tag for epigenetic transcriptional repression by recruiting HP1 (CBX1, CBX3 and/or CBX5) proteins to methylated histones. Mainly functions in euchromatin regions, thereby playing a central role in the silencing of euchromatic genes. H3 'Lys-9' trimethylation is coordinated with DNA methylation. Probably forms a complex with MBD1 and ATF7IP that represses transcription and couples DNA methylation and histone 'Lys-9' trimethylation. Its activity is dependent on MBD1 and is heritably maintained through DNA replication by being recruited by CAF-1. SETDB1 is targeted to histone H3 by TRIM28/TIF1B, a factor recruited by KRAB zinc-finger proteins. Probably forms a corepressor complex required for activated KRAS-mediated promoter hypermethylation and transcriptional silencing of tumor suppressor genes (TSGs) or other tumor-related genes in colorectal cancer (CRC) cells. Required to maintain a transcriptionally repressive state of genes in undifferentiated embryonic stem cells (ESCs). In ESCs, in collaboration with TRIM28, is also required for H3K9me3 and silencing of endogenous and introduced retroviruses in a DNA-methylation independent-pathway. Associates at promoter regions of tumor suppressor genes (TSGs) leading to their gene silencing. The SETDB1-TRIM28-ZNF274 complex may play a role in recruiting ATRX to the 3'-exons of zinc-finger coding genes with atypical chromatin signatures to establish or maintain/protect H3K9me3 at these transcriptionally active regions. The polypeptide is Histone-lysine N-methyltransferase SETDB1 (Mus musculus (Mouse)).